Reading from the N-terminus, the 524-residue chain is MSSTTSSSRSDLEKVPVPQVTPRDSDSDKGSLSPEPSTLEAQSSEKPPHHIFTRSRKLQMVCIVSLAAIFSPLSSNIYFPALDDVSKSLNISMSLATLTITVYMIVQGLAPSFWGSMSDATGRRPVFIGTFIVYLVANIALAESKNYGELMAFRALQAAGSAATISIGAGVIGDITNSEERGSLVGIFGGVRMLGQGIGPVFGGIFTQYLGYRSIFWFLTIAGGVSLLSILVLLPETLRPIAGNGTVKLNGIHKPFIYTITGQTGVVEGAQPEAKKTKTSWKSVFAPLTFLVEKDVFITLFFGSIVYTVWSMVTSSTTDLFSEVYGLSSLDIGLTFLGNGFGCMSGSYLVGYLMDYNHRLTEREYCEKHGYPAGTRVNLKSHPDFPIEVARMRNTWWVIAIFIVTVALYGVSLRTHLAVPIILQYFIAFCSTGLFTINSALVIDLYPGASASATAVNNLMRCLLGAGGVAIVQPILDALKPDYTFLLLAGITLVMTPLLYVEDRWGPGWRHARERRLKAKANGN.

The disordered stretch occupies residues Met1–His49. The segment covering Pro34–Glu45 has biased composition (polar residues). Residues Met60–Pro80 form a helical membrane-spanning segment. A glycan (N-linked (GlcNAc...) asparagine) is linked at Asn90. 5 consecutive transmembrane segments (helical) span residues Leu95–Gly115, Pro125–Lys145, Ala155–Ile175, Gly186–Phe206, and Ile215–Pro235. The N-linked (GlcNAc...) asparagine glycan is linked to Asn244. 6 consecutive transmembrane segments (helical) span residues Val296 to Ser316, Ile332 to Tyr352, Thr395 to Thr415, Leu417 to Ile437, Leu459 to Leu479, and Pro481 to Val501.

This sequence belongs to the major facilitator superfamily.

Its subcellular location is the cell membrane. It carries out the reaction citrate(in) = citrate(out). In terms of biological role, transmembrane transporter that exports citrate across the cell membrane. The sequence is that of Citrate exporter 1 from Aspergillus niger (strain ATCC 1015 / CBS 113.46 / FGSC A1144 / LSHB Ac4 / NCTC 3858a / NRRL 328 / USDA 3528.7).